A 488-amino-acid polypeptide reads, in one-letter code: Malonate-semialdehyde dehydrogenase (488 aa).

Alanine 150, phenylalanine 152, lysine 176, glutamate 179, arginine 180, serine 229, and threonine 251 together coordinate NAD(+). Cysteine 284 (nucleophile) is an active-site residue. NAD(+) is bound at residue glutamate 382.

Belongs to the aldehyde dehydrogenase family. IolA subfamily. Homotetramer.

It carries out the reaction 3-oxopropanoate + NAD(+) + CoA + H2O = hydrogencarbonate + acetyl-CoA + NADH + H(+). The enzyme catalyses 2-methyl-3-oxopropanoate + NAD(+) + CoA + H2O = propanoyl-CoA + hydrogencarbonate + NADH + H(+). Its pathway is polyol metabolism; myo-inositol degradation into acetyl-CoA; acetyl-CoA from myo-inositol: step 7/7. Functionally, catalyzes the oxidation of malonate semialdehyde (MSA) and methylmalonate semialdehyde (MMSA) into acetyl-CoA and propanoyl-CoA, respectively. Is involved in a myo-inositol catabolic pathway. Bicarbonate, and not CO2, is the end-product of the enzymatic reaction. This Listeria monocytogenes serotype 4b (strain F2365) protein is Malonate-semialdehyde dehydrogenase.